The following is a 218-amino-acid chain: Orotate phosphoribosyltransferase (218 aa).

Lysine 26 is a 5-phospho-alpha-D-ribose 1-diphosphate binding site. Position 34–35 (34–35 (FF)) interacts with orotate. 5-phospho-alpha-D-ribose 1-diphosphate contacts are provided by residues 72–73 (YK), arginine 99, lysine 100, lysine 103, histidine 105, and 124–132 (DDVITAGTA). Residues threonine 128 and arginine 156 each coordinate orotate.

This sequence belongs to the purine/pyrimidine phosphoribosyltransferase family. PyrE subfamily. In terms of assembly, homodimer. The cofactor is Mg(2+).

It carries out the reaction orotidine 5'-phosphate + diphosphate = orotate + 5-phospho-alpha-D-ribose 1-diphosphate. It functions in the pathway pyrimidine metabolism; UMP biosynthesis via de novo pathway; UMP from orotate: step 1/2. In terms of biological role, catalyzes the transfer of a ribosyl phosphate group from 5-phosphoribose 1-diphosphate to orotate, leading to the formation of orotidine monophosphate (OMP). The sequence is that of Orotate phosphoribosyltransferase from Hamiltonella defensa subsp. Acyrthosiphon pisum (strain 5AT).